The sequence spans 207 residues: 3-isopropylmalate dehydratase small subunit (207 aa).

This sequence belongs to the LeuD family. LeuD type 1 subfamily. In terms of assembly, heterodimer of LeuC and LeuD.

It carries out the reaction (2R,3S)-3-isopropylmalate = (2S)-2-isopropylmalate. It participates in amino-acid biosynthesis; L-leucine biosynthesis; L-leucine from 3-methyl-2-oxobutanoate: step 2/4. Catalyzes the isomerization between 2-isopropylmalate and 3-isopropylmalate, via the formation of 2-isopropylmaleate. In Buchnera aphidicola subsp. Acyrthosiphon pisum (strain APS) (Acyrthosiphon pisum symbiotic bacterium), this protein is 3-isopropylmalate dehydratase small subunit (leuD).